The following is a 101-amino-acid chain: Urease subunit beta (101 aa).

The protein belongs to the urease beta subunit family. As to quaternary structure, heterotrimer of UreA (gamma), UreB (beta) and UreC (alpha) subunits. Three heterotrimers associate to form the active enzyme.

The protein resides in the cytoplasm. It catalyses the reaction urea + 2 H2O + H(+) = hydrogencarbonate + 2 NH4(+). Its pathway is nitrogen metabolism; urea degradation; CO(2) and NH(3) from urea (urease route): step 1/1. The protein is Urease subunit beta of Pseudomonas aeruginosa (strain LESB58).